The sequence spans 188 residues: Nicotinamide/nicotinic acid mononucleotide adenylyltransferase (188 aa).

This sequence belongs to the archaeal NMN adenylyltransferase family.

It catalyses the reaction beta-nicotinamide D-ribonucleotide + ATP + H(+) = diphosphate + NAD(+). The enzyme catalyses nicotinate beta-D-ribonucleotide + ATP + H(+) = deamido-NAD(+) + diphosphate. It participates in cofactor biosynthesis; NAD(+) biosynthesis; NAD(+) from nicotinamide D-ribonucleotide: step 1/1. Its pathway is cofactor biosynthesis; NAD(+) biosynthesis; deamido-NAD(+) from nicotinate D-ribonucleotide: step 1/1. Functionally, dual substrate specificity enzyme that catalyzes the formation of NAD(+) from nicotinamide mononucleotide (NMN) and the formation of deamido-NAD(+) (NaAD) from nicotinate mononucleotide (NaMN). Shows nearly identical catalytic efficiency for both physiological substrates. Plays an essential role in all three routes of NAD biogenesis, de novo synthesis as well as the deamidating and nondeamidating salvage pathways. The chain is Nicotinamide/nicotinic acid mononucleotide adenylyltransferase from Acinetobacter baylyi (strain ATCC 33305 / BD413 / ADP1).